Here is a 485-residue protein sequence, read N- to C-terminus: UDP-N-acetylmuramate--L-alanine ligase (485 aa).

120–126 (GSHGKTT) is a binding site for ATP.

It belongs to the MurCDEF family.

It is found in the cytoplasm. It catalyses the reaction UDP-N-acetyl-alpha-D-muramate + L-alanine + ATP = UDP-N-acetyl-alpha-D-muramoyl-L-alanine + ADP + phosphate + H(+). The protein operates within cell wall biogenesis; peptidoglycan biosynthesis. Its function is as follows. Cell wall formation. This is UDP-N-acetylmuramate--L-alanine ligase from Rickettsia africae (strain ESF-5).